We begin with the raw amino-acid sequence, 140 residues long: NADPH-dependent 7-cyano-7-deazaguanine reductase (140 aa).

The active-site Thioimide intermediate is the Cys51. The active-site Proton donor is the Asp58. Residues 73–75 (LES) and 92–93 (HE) contribute to the substrate site.

Belongs to the GTP cyclohydrolase I family. QueF type 1 subfamily.

It is found in the cytoplasm. It catalyses the reaction 7-aminomethyl-7-carbaguanine + 2 NADP(+) = 7-cyano-7-deazaguanine + 2 NADPH + 3 H(+). It participates in tRNA modification; tRNA-queuosine biosynthesis. Functionally, catalyzes the NADPH-dependent reduction of 7-cyano-7-deazaguanine (preQ0) to 7-aminomethyl-7-deazaguanine (preQ1). This is NADPH-dependent 7-cyano-7-deazaguanine reductase from Syntrophus aciditrophicus (strain SB).